We begin with the raw amino-acid sequence, 174 residues long: Large ribosomal subunit protein uL18 (174 aa).

Belongs to the universal ribosomal protein uL18 family. Part of the 50S ribosomal subunit. Contacts the 5S and 23S rRNAs.

This is one of the proteins that bind and probably mediate the attachment of the 5S RNA into the large ribosomal subunit, where it forms part of the central protuberance. The protein is Large ribosomal subunit protein uL18 of Methanosarcina barkeri (strain Fusaro / DSM 804).